The sequence spans 120 residues: uncharacterized protein (120 aa).

A helical transmembrane segment spans residues 63–83; the sequence is IDMSCVICFNFSCHLFVVIFI.

It is found in the membrane. This is an uncharacterized protein from Saccharomyces cerevisiae (strain ATCC 204508 / S288c) (Baker's yeast).